Consider the following 485-residue polypeptide: Glutamyl-tRNA(Gln) amidotransferase subunit A (485 aa).

Residues Lys76 and Ser151 each act as charge relay system in the active site. Ser175 serves as the catalytic Acyl-ester intermediate.

Belongs to the amidase family. GatA subfamily. In terms of assembly, heterotrimer of A, B and C subunits.

It catalyses the reaction L-glutamyl-tRNA(Gln) + L-glutamine + ATP + H2O = L-glutaminyl-tRNA(Gln) + L-glutamate + ADP + phosphate + H(+). Its function is as follows. Allows the formation of correctly charged Gln-tRNA(Gln) through the transamidation of misacylated Glu-tRNA(Gln) in organisms which lack glutaminyl-tRNA synthetase. The reaction takes place in the presence of glutamine and ATP through an activated gamma-phospho-Glu-tRNA(Gln). This is Glutamyl-tRNA(Gln) amidotransferase subunit A from Pelagibacter ubique (strain HTCC1062).